A 149-amino-acid chain; its full sequence is Endoribonuclease YbeY (149 aa).

Residues His116, His120, and His126 each contribute to the Zn(2+) site.

This sequence belongs to the endoribonuclease YbeY family. Zn(2+) is required as a cofactor.

It localises to the cytoplasm. Functionally, single strand-specific metallo-endoribonuclease involved in late-stage 70S ribosome quality control and in maturation of the 3' terminus of the 16S rRNA. This Nocardioides sp. (strain ATCC BAA-499 / JS614) protein is Endoribonuclease YbeY.